Here is a 240-residue protein sequence, read N- to C-terminus: UDP-2,3-diacylglucosamine hydrolase (240 aa).

The Mn(2+) site is built by aspartate 8, histidine 10, aspartate 41, asparagine 79, and histidine 114. 79-80 (NR) lines the substrate pocket. Substrate-binding residues include aspartate 122, serine 160, asparagine 164, lysine 167, and histidine 195. Histidine 195 and histidine 197 together coordinate Mn(2+).

This sequence belongs to the LpxH family. Mn(2+) is required as a cofactor.

It is found in the cell inner membrane. It catalyses the reaction UDP-2-N,3-O-bis[(3R)-3-hydroxytetradecanoyl]-alpha-D-glucosamine + H2O = 2-N,3-O-bis[(3R)-3-hydroxytetradecanoyl]-alpha-D-glucosaminyl 1-phosphate + UMP + 2 H(+). The protein operates within glycolipid biosynthesis; lipid IV(A) biosynthesis; lipid IV(A) from (3R)-3-hydroxytetradecanoyl-[acyl-carrier-protein] and UDP-N-acetyl-alpha-D-glucosamine: step 4/6. Functionally, hydrolyzes the pyrophosphate bond of UDP-2,3-diacylglucosamine to yield 2,3-diacylglucosamine 1-phosphate (lipid X) and UMP by catalyzing the attack of water at the alpha-P atom. Involved in the biosynthesis of lipid A, a phosphorylated glycolipid that anchors the lipopolysaccharide to the outer membrane of the cell. The polypeptide is UDP-2,3-diacylglucosamine hydrolase (Shigella sonnei (strain Ss046)).